The primary structure comprises 312 residues: DNA-directed RNA polymerase subunit alpha (312 aa).

Residues 1–226 form an alpha N-terminal domain (alpha-NTD) region; that stretch reads MIEFEKPIIT…EHLNLFTDLT (226 aa). Residues 243–312 form an alpha C-terminal domain (alpha-CTD) region; the sequence is DEKVLDRTIE…DLGLGLKNDK (70 aa).

The protein belongs to the RNA polymerase alpha chain family. As to quaternary structure, homodimer. The RNAP catalytic core consists of 2 alpha, 1 beta, 1 beta' and 1 omega subunit. When a sigma factor is associated with the core the holoenzyme is formed, which can initiate transcription.

The enzyme catalyses RNA(n) + a ribonucleoside 5'-triphosphate = RNA(n+1) + diphosphate. DNA-dependent RNA polymerase catalyzes the transcription of DNA into RNA using the four ribonucleoside triphosphates as substrates. The chain is DNA-directed RNA polymerase subunit alpha from Streptococcus mutans serotype c (strain ATCC 700610 / UA159).